The following is a 428-amino-acid chain: Pyruvate kinase (428 aa).

Position 34 (Arg34) interacts with substrate. K(+) is bound by residues Asn36, Ser38, Asp68, and Thr69. Asn36–His39 contacts ATP. Positions 75 and 152 each coordinate ATP. Residue Glu214 coordinates Mg(2+). Residues Gly237, Asp238, and Thr270 each coordinate substrate. Mg(2+) is bound at residue Asp238.

Belongs to the pyruvate kinase family. In terms of assembly, homotetramer. It depends on Mg(2+) as a cofactor. Requires K(+) as cofactor.

The enzyme catalyses pyruvate + ATP = phosphoenolpyruvate + ADP + H(+). It participates in carbohydrate degradation; glycolysis; pyruvate from D-glyceraldehyde 3-phosphate: step 5/5. This Encephalitozoon cuniculi (strain GB-M1) (Microsporidian parasite) protein is Pyruvate kinase (PYK1).